The sequence spans 460 residues: Interleukin-6 receptor subunit alpha (460 aa).

A signal peptide spans Met1 to Ala19. The 97-residue stretch at Leu20 to Ser116 folds into the Ig-like C2-type domain. Residues Leu20–Pro364 are Extracellular-facing. 4 disulfides stabilise this stretch: Cys25-Cys190, Cys47-Cys92, Cys117-Cys128, and Cys162-Cys173. Residues Asn32 and Asn55 are each glycosylated (N-linked (GlcNAc...) asparagine). 2 consecutive Fibronectin type-III domains span residues Pro109–Asp214 and Pro215–Ile313. Asn150 carries N-linked (GlcNAc...) asparagine glycosylation. Asn218 carries an N-linked (GlcNAc...) asparagine glycan. The short motif at Trp300–Ser304 is the WSXWS motif element. Residues Thr365–Leu385 form a helical membrane-spanning segment. Residues Arg386 to Arg460 lie on the Cytoplasmic side of the membrane.

This sequence belongs to the type I cytokine receptor family. Type 3 subfamily. As to quaternary structure, component of a hexamer of two molecules each of IL6, IL6R and IL6ST; first binds to IL6 to associate with the signaling subunit IL6ST. Interacts (via N-terminal ectodomain) with SORL1; this interaction may affect IL6-binding to IL6R, hence decrease IL6 'classic-signaling'. In terms of assembly, also interacts with SORL1; this interaction leads to soluble IL6R internalization. May form a trimeric complex with the soluble SORL1 ectodomain and circulating IL6 receptor; this interaction might stabilize circulating IL6, hence promote IL6 'trans-signaling'. Post-translationally, a short soluble form is also released from the membrane by proteolysis. The sIL6R is formed by limited proteolysis of membrane-bound receptors, a process referred to as ectodomain shedding. mIL6R is cleaved by the proteases ADAM10 and ADAM17. Glycosylated. Glycosylation is dispensable for transport, signaling, and cell-surface turnover. Glycosylation at Asn-55 is a protease-regulatory exosite. Glycosylation is required for ADAM17-mediated proteolysis. As to expression, expressed by dendritic cells. Detected in the cerebrospinal fluid.

The protein localises to the cell membrane. Its subcellular location is the secreted. Its activity is regulated as follows. Classic and trans-signaling are both inhibited by tocilizumab, a humanized monoclonal antibody that blocks interleukin IL6R signaling. Part of the receptor for interleukin 6. Binds to IL6 with low affinity, but does not transduce a signal. Signal activation necessitate an association with IL6ST. Activation leads to the regulation of the immune response, acute-phase reactions and hematopoiesis. The interaction with membrane-bound IL6R and IL6ST stimulates 'classic signaling', the restricted expression of the IL6R limits classic IL6 signaling to only a few tissues such as the liver and some cells of the immune system. Whereas the binding of IL6 and soluble IL6R to IL6ST stimulates 'trans-signaling'. Alternatively, 'cluster signaling' occurs when membrane-bound IL6:IL6R complexes on transmitter cells activate IL6ST receptors on neighboring receiver cells. Functionally, signaling via the membrane-bound IL6R is mostly regenerative and anti-inflammatory. Drives naive CD4(+) T cells to the Th17 lineage, through 'cluster signaling' by dendritic cells. Its function is as follows. Soluble form of IL6 receptor (sIL6R) that acts as an agonist of IL6 activity. The IL6:sIL6R complex (hyper-IL6) binds to IL6ST/gp130 on cell surfaces and induces signaling also on cells that do not express membrane-bound IL6R in a process called IL6 'trans-signaling'. sIL6R is causative for the pro-inflammatory properties of IL6 and an important player in the development of chronic inflammatory diseases. In complex with IL6, is required for induction of VEGF production. Plays a protective role during liver injury, being required for maintenance of tissue regeneration. 'Trans-signaling' in central nervous system regulates energy and glucose homeostasis. In Mus musculus (Mouse), this protein is Interleukin-6 receptor subunit alpha.